The chain runs to 303 residues: Methionyl-tRNA formyltransferase (303 aa).

(6S)-5,6,7,8-tetrahydrofolate is bound at residue 109–112; sequence SLLP.

Belongs to the Fmt family.

It carries out the reaction L-methionyl-tRNA(fMet) + (6R)-10-formyltetrahydrofolate = N-formyl-L-methionyl-tRNA(fMet) + (6S)-5,6,7,8-tetrahydrofolate + H(+). In terms of biological role, attaches a formyl group to the free amino group of methionyl-tRNA(fMet). The formyl group appears to play a dual role in the initiator identity of N-formylmethionyl-tRNA by promoting its recognition by IF2 and preventing the misappropriation of this tRNA by the elongation apparatus. The chain is Methionyl-tRNA formyltransferase from Helicobacter pylori (strain ATCC 700392 / 26695) (Campylobacter pylori).